A 122-amino-acid polypeptide reads, in one-letter code: Ribosome-binding factor A (122 aa).

Belongs to the RbfA family. Monomer. Binds 30S ribosomal subunits, but not 50S ribosomal subunits or 70S ribosomes.

The protein resides in the cytoplasm. Functionally, one of several proteins that assist in the late maturation steps of the functional core of the 30S ribosomal subunit. Associates with free 30S ribosomal subunits (but not with 30S subunits that are part of 70S ribosomes or polysomes). Required for efficient processing of 16S rRNA. May interact with the 5'-terminal helix region of 16S rRNA. The protein is Ribosome-binding factor A of Geotalea uraniireducens (strain Rf4) (Geobacter uraniireducens).